A 1408-amino-acid polypeptide reads, in one-letter code: ABC multidrug transporter MDR1 (1408 aa).

Low complexity predominate over residues 1 to 13; sequence MSASPSPIGAAAG. The segment at 1–103 is disordered; the sequence is MSASPSPIGA…SISSAVPKSH (103 aa). Positions 17-38 are enriched in basic and acidic residues; sequence LQARRDEEVVDSEKDALAHDSH. The next 2 membrane-spanning stretches (helical) occupy residues 147 to 167 and 223 to 243; these read FAAP…IAAG and LYLM…MFIW. The 308-residue stretch at 157–464 folds into the ABC transmembrane type-1 1 domain; that stretch reads VFGLLLAIAA…LAPELAAVTK (308 aa). N-linked (GlcNAc...) asparagine glycosylation is present at asparagine 244. Helical transmembrane passes span 296 to 316, 321 to 341, 408 to 428, and 436 to 456; these read KVAL…LAFV, LAGA…IMMT, IMFF…GILV, and GIVI…AMLA. Positions 499 to 744 constitute an ABC transporter 1 domain; it reads ISFENVRFHY…ENGPYAQLVN (246 aa). 534 to 541 is a binding site for ATP; that stretch reads GASGSGKS. A run of 2 helical transmembrane segments spans residues 838–858 and 882–902; these read IFAF…AILF and LWYF…SAGF. The region spanning 838-1125 is the ABC transmembrane type-1 2 domain; the sequence is IFAFIAAICA…VFTFVPDASK (288 aa). Asparagine 934 carries N-linked (GlcNAc...) asparagine glycosylation. 4 helical membrane passes run 952–972, 973–993, 1072–1092, and 1099–1119; these read GLFG…IGGC, IIGL…IPIL, GLTF…IIDG, and FYTV…VFTF. Residues asparagine 1127 and asparagine 1182 are each glycosylated (N-linked (GlcNAc...) asparagine). The 241-residue stretch at 1162–1402 folds into the ABC transporter 2 domain; sequence VRIEGVHFRY…KGGYYDLVQM (241 aa). 1197–1204 lines the ATP pocket; the sequence is GPSGCGKS. Asparagine 1404 carries an N-linked (GlcNAc...) asparagine glycan.

The protein belongs to the ABC transporter superfamily. ABCB family. Multidrug resistance exporter (TC 3.A.1.201) subfamily.

It is found in the cell membrane. The catalysed reaction is itraconazole(in) + ATP + H2O = itraconazole(out) + ADP + phosphate + H(+). The enzyme catalyses voriconazole(in) + ATP + H2O = voriconazole(out) + ADP + phosphate + H(+). It carries out the reaction fluconazole(in) + ATP + H2O = fluconazole(out) + ADP + phosphate + H(+). Functionally, pleiotropic ABC efflux transporter that confers resistance to structurally and functionally unrelated compounds including azoles such as fluconazole (FLC), itraconazole (ITC), posaconazole (POS), nocodazole and voriconazole (VRC). The protein is ABC multidrug transporter MDR1 of Cryptococcus deuterogattii (strain R265) (Cryptococcus gattii VGII (strain R265)).